A 598-amino-acid polypeptide reads, in one-letter code: Elongation factor 4 (598 aa).

Positions 4-181 (SKIRNFSIIA…AVIEKIPAPK (178 aa)) constitute a tr-type G domain. Residues 16–21 (DHGKST) and 128–131 (NKID) contribute to the GTP site.

It belongs to the TRAFAC class translation factor GTPase superfamily. Classic translation factor GTPase family. LepA subfamily.

It is found in the cell membrane. The enzyme catalyses GTP + H2O = GDP + phosphate + H(+). Functionally, required for accurate and efficient protein synthesis under certain stress conditions. May act as a fidelity factor of the translation reaction, by catalyzing a one-codon backward translocation of tRNAs on improperly translocated ribosomes. Back-translocation proceeds from a post-translocation (POST) complex to a pre-translocation (PRE) complex, thus giving elongation factor G a second chance to translocate the tRNAs correctly. Binds to ribosomes in a GTP-dependent manner. This is Elongation factor 4 from Mycoplasma mobile (strain ATCC 43663 / 163K / NCTC 11711) (Mesomycoplasma mobile).